A 276-amino-acid chain; its full sequence is Formamidopyrimidine-DNA glycosylase (276 aa).

The active-site Schiff-base intermediate with DNA is P2. E3 functions as the Proton donor in the catalytic mechanism. The active-site Proton donor; for beta-elimination activity is K60. 3 residues coordinate DNA: H93, R112, and R155. Residues 240-274 (LVYGRKDEACTKCGAEIIRFVVGGRGTHICPDCQK) form an FPG-type zinc finger. The Proton donor; for delta-elimination activity role is filled by R264.

This sequence belongs to the FPG family. Monomer. Requires Zn(2+) as cofactor.

It catalyses the reaction Hydrolysis of DNA containing ring-opened 7-methylguanine residues, releasing 2,6-diamino-4-hydroxy-5-(N-methyl)formamidopyrimidine.. The catalysed reaction is 2'-deoxyribonucleotide-(2'-deoxyribose 5'-phosphate)-2'-deoxyribonucleotide-DNA = a 3'-end 2'-deoxyribonucleotide-(2,3-dehydro-2,3-deoxyribose 5'-phosphate)-DNA + a 5'-end 5'-phospho-2'-deoxyribonucleoside-DNA + H(+). Its function is as follows. Involved in base excision repair of DNA damaged by oxidation or by mutagenic agents. Acts as a DNA glycosylase that recognizes and removes damaged bases. Has a preference for oxidized purines, such as 7,8-dihydro-8-oxoguanine (8-oxoG). Has AP (apurinic/apyrimidinic) lyase activity and introduces nicks in the DNA strand. Cleaves the DNA backbone by beta-delta elimination to generate a single-strand break at the site of the removed base with both 3'- and 5'-phosphates. The chain is Formamidopyrimidine-DNA glycosylase from Brevibacillus brevis (strain 47 / JCM 6285 / NBRC 100599).